Here is a 133-residue protein sequence, read N- to C-terminus: uncharacterized protein (133 aa).

Helical transmembrane passes span 8–28 and 46–66; these read MVLL…LLLL and SFSI…SIGA.

The protein resides in the membrane. This is an uncharacterized protein from Saccharomyces cerevisiae (strain ATCC 204508 / S288c) (Baker's yeast).